The primary structure comprises 91 residues: Small ribosomal subunit protein uS19 (91 aa).

Belongs to the universal ribosomal protein uS19 family.

Protein S19 forms a complex with S13 that binds strongly to the 16S ribosomal RNA. This is Small ribosomal subunit protein uS19 from Burkholderia cenocepacia (strain HI2424).